A 178-amino-acid chain; its full sequence is Crossover junction endodeoxyribonuclease RuvC (178 aa).

Catalysis depends on residues aspartate 11, glutamate 71, and aspartate 143. Mg(2+)-binding residues include aspartate 11, glutamate 71, and aspartate 143.

The protein belongs to the RuvC family. Homodimer which binds Holliday junction (HJ) DNA. The HJ becomes 2-fold symmetrical on binding to RuvC with unstacked arms; it has a different conformation from HJ DNA in complex with RuvA. In the full resolvosome a probable DNA-RuvA(4)-RuvB(12)-RuvC(2) complex forms which resolves the HJ. Requires Mg(2+) as cofactor.

Its subcellular location is the cytoplasm. It carries out the reaction Endonucleolytic cleavage at a junction such as a reciprocal single-stranded crossover between two homologous DNA duplexes (Holliday junction).. In terms of biological role, the RuvA-RuvB-RuvC complex processes Holliday junction (HJ) DNA during genetic recombination and DNA repair. Endonuclease that resolves HJ intermediates. Cleaves cruciform DNA by making single-stranded nicks across the HJ at symmetrical positions within the homologous arms, yielding a 5'-phosphate and a 3'-hydroxyl group; requires a central core of homology in the junction. The consensus cleavage sequence is 5'-(A/T)TT(C/G)-3'. Cleavage occurs on the 3'-side of the TT dinucleotide at the point of strand exchange. HJ branch migration catalyzed by RuvA-RuvB allows RuvC to scan DNA until it finds its consensus sequence, where it cleaves and resolves the cruciform DNA. This is Crossover junction endodeoxyribonuclease RuvC from Neisseria meningitidis serogroup A / serotype 4A (strain DSM 15465 / Z2491).